We begin with the raw amino-acid sequence, 208 residues long: Protein-L-isoaspartate O-methyltransferase (208 aa).

Ser59 is a catalytic residue.

The protein belongs to the methyltransferase superfamily. L-isoaspartyl/D-aspartyl protein methyltransferase family.

The protein resides in the cytoplasm. It catalyses the reaction [protein]-L-isoaspartate + S-adenosyl-L-methionine = [protein]-L-isoaspartate alpha-methyl ester + S-adenosyl-L-homocysteine. Its function is as follows. Catalyzes the methyl esterification of L-isoaspartyl residues in peptides and proteins that result from spontaneous decomposition of normal L-aspartyl and L-asparaginyl residues. It plays a role in the repair and/or degradation of damaged proteins. This is Protein-L-isoaspartate O-methyltransferase from Aliivibrio salmonicida (strain LFI1238) (Vibrio salmonicida (strain LFI1238)).